A 293-amino-acid chain; its full sequence is 4-hydroxy-tetrahydrodipicolinate synthase (293 aa).

Residue T45 participates in pyruvate binding. Y133 functions as the Proton donor/acceptor in the catalytic mechanism. The active-site Schiff-base intermediate with substrate is K161. Pyruvate is bound at residue I203.

This sequence belongs to the DapA family. Homotetramer; dimer of dimers.

It is found in the cytoplasm. The enzyme catalyses L-aspartate 4-semialdehyde + pyruvate = (2S,4S)-4-hydroxy-2,3,4,5-tetrahydrodipicolinate + H2O + H(+). It participates in amino-acid biosynthesis; L-lysine biosynthesis via DAP pathway; (S)-tetrahydrodipicolinate from L-aspartate: step 3/4. In terms of biological role, catalyzes the condensation of (S)-aspartate-beta-semialdehyde [(S)-ASA] and pyruvate to 4-hydroxy-tetrahydrodipicolinate (HTPA). The sequence is that of 4-hydroxy-tetrahydrodipicolinate synthase from Aliivibrio fischeri (strain ATCC 700601 / ES114) (Vibrio fischeri).